We begin with the raw amino-acid sequence, 283 residues long: uncharacterized protein (283 aa).

Residue Gly-2 is the site of N-myristoyl glycine; by host attachment. N-linked (GlcNAc...) asparagine; by host glycans are attached at residues Asn-31, Asn-95, Asn-105, Asn-108, Asn-137, and Asn-147. Helical transmembrane passes span 181 to 201 and 250 to 270; these read IIAA…VVYF and FIVL…LDIP. N-linked (GlcNAc...) asparagine; by host glycosylation is present at Asn-277.

It is found in the membrane. This is an uncharacterized protein from Acanthamoeba polyphaga (Amoeba).